Here is a 196-residue protein sequence, read N- to C-terminus: Ribosome maturation factor RimP (196 aa).

The disordered stretch occupies residues 164–196; it reads LAPQKPNKPGPKKPGHDKKKPSNEPAAGKPRAE. Residues 173-182 are compositionally biased toward basic residues; it reads GPKKPGHDKK.

This sequence belongs to the RimP family.

It is found in the cytoplasm. Its function is as follows. Required for maturation of 30S ribosomal subunits. The chain is Ribosome maturation factor RimP from Xanthomonas campestris pv. campestris (strain 8004).